Here is a 309-residue protein sequence, read N- to C-terminus: Homoserine kinase (309 aa).

An ATP-binding site is contributed by 91–101 (PIGSGLGSSAC).

Belongs to the GHMP kinase family. Homoserine kinase subfamily.

It localises to the cytoplasm. The catalysed reaction is L-homoserine + ATP = O-phospho-L-homoserine + ADP + H(+). It participates in amino-acid biosynthesis; L-threonine biosynthesis; L-threonine from L-aspartate: step 4/5. Its function is as follows. Catalyzes the ATP-dependent phosphorylation of L-homoserine to L-homoserine phosphate. The protein is Homoserine kinase of Pectobacterium carotovorum subsp. carotovorum (strain PC1).